The chain runs to 428 residues: ETS domain-containing protein Elk-1 (428 aa).

The ETS DNA-binding region spans 5–86 (VTLWQFLLQL…SGQKFVYKFV (82 aa)). Disordered stretches follow at residues 121 to 149 (AAPG…ARSS), 165 to 205 (QSLQ…SPLE), and 228 to 358 (NLKS…SLLP). Residues 177-205 (PAVVLPSAAPAGAAAPPSGSRSTSPSPLE) show a composition bias toward low complexity. Residues Lys-230, Lys-249, and Lys-254 each participate in a glycyl lysine isopeptide (Lys-Gly) (interchain with G-Cter in SUMO) cross-link. Residues 248 to 261 (VKVEGPKEELEVAG) show a composition bias toward basic and acidic residues. Phosphoserine; by MAPK1 is present on Ser-324. Thr-336, Thr-353, Thr-363, and Thr-368 each carry phosphothreonine; by MAPK1. A sufficient for interaction with MAD2L2 region spans residues 349-399 (GPALTPSLLPTHTLTPVLLTPSSLPPSIHFWSTLSPIAPRSPAKLSFQFPS). O-linked (GlcNAc) threonine glycosylation is present at Thr-381. Ser-383 carries the post-translational modification Phosphoserine; by MAPK1 and MAPK8. Ser-389 is modified (phosphoserine; by MAPK1). The residue at position 417 (Thr-417) is a Phosphothreonine; by MAPK1. A Phosphoserine; by MAPK1 modification is found at Ser-422.

It belongs to the ETS family. Interacts in its sumoylated form with PIAS2/PIASX which enhances its transcriptional activator activity. Interacts with MAD2L2; the interaction is direct and promotes phosphorylation by the kinases MAPK8 and/or MAPK9. Interacts with POU1F1. In terms of processing, sumoylation represses transcriptional activator activity as it results in recruitment of HDAC2 to target gene promoters which leads to decreased histone acetylation and reduced transactivator activity. It also regulates nuclear retention. Post-translationally, on mitogenic stimulation, phosphorylated on C-terminal serine and threonine residues by MAPK1. Ser-383 and Ser-389 are the preferred sites for MAPK1. In vitro, phosphorylation by MAPK1 potentiates ternary complex formation with the serum responses factors, SRE and SRF. Also phosphorylated on Ser-383 by MAPK8 and/or MAKP9. Phosphorylation leads to loss of sumoylation and restores transcriptional activator activity. Phosphorylated and activated by CAMK4, MAPK11, MAPK12 and MAPK14. Upon bFGF stimulus, phosphorylated by PAK1. Phosphorylated by PRP4K at Thr-417; phosphorylation activation ELK1 transcriptional activity. Lung and testis.

The protein resides in the nucleus. Transcription factor that binds to purine-rich DNA sequences. Forms a ternary complex with SRF and the ETS and SRF motifs of the serum response element (SRE) on the promoter region of immediate early genes such as FOS and IER2. Induces target gene transcription upon JNK and MAPK-signaling pathways stimulation. This Homo sapiens (Human) protein is ETS domain-containing protein Elk-1.